The following is a 208-amino-acid chain: ATP-dependent Clp protease proteolytic subunit (208 aa).

Catalysis depends on serine 105, which acts as the Nucleophile. Histidine 130 is an active-site residue.

The protein belongs to the peptidase S14 family. Fourteen ClpP subunits assemble into 2 heptameric rings which stack back to back to give a disk-like structure with a central cavity, resembling the structure of eukaryotic proteasomes.

It localises to the cytoplasm. The catalysed reaction is Hydrolysis of proteins to small peptides in the presence of ATP and magnesium. alpha-casein is the usual test substrate. In the absence of ATP, only oligopeptides shorter than five residues are hydrolyzed (such as succinyl-Leu-Tyr-|-NHMec, and Leu-Tyr-Leu-|-Tyr-Trp, in which cleavage of the -Tyr-|-Leu- and -Tyr-|-Trp bonds also occurs).. Functionally, cleaves peptides in various proteins in a process that requires ATP hydrolysis. Has a chymotrypsin-like activity. Plays a major role in the degradation of misfolded proteins. This Xylella fastidiosa (strain M12) protein is ATP-dependent Clp protease proteolytic subunit.